Here is a 336-residue protein sequence, read N- to C-terminus: Protein REVEILLE 7-like (336 aa).

The region spanning 60–114 is the HTH myb-type domain; that stretch reads TVTKQREKWSEEEHDRFLEAIKLYGRGWRQIQEHIGTKTAVQIRSHAQKFFSKMA. Residues 87 to 110 constitute a DNA-binding region (H-T-H motif); it reads WRQIQEHIGTKTAVQIRSHAQKFF. Residues 114-197 are disordered; that stretch reads AQEADSRSEG…KQPFKDDSDI (84 aa). Over residues 134-144 the composition is skewed to basic residues; it reads RPKRKPAHPYP. Positions 145 to 158 are enriched in pro residues; the sequence is RKSPVPYTQSPPPN. Over residues 167-189 the composition is skewed to polar residues; it reads KSPTSVLSSFGSEDQNNYTTSKQ.

The protein resides in the nucleus. Its function is as follows. Probable transcription factor. The chain is Protein REVEILLE 7-like (RVE7L) from Arabidopsis thaliana (Mouse-ear cress).